The following is a 463-amino-acid chain: L-seryl-tRNA(Sec) selenium transferase (463 aa).

An N6-(pyridoxal phosphate)lysine modification is found at lysine 295.

Belongs to the SelA family. Homodecamer; pentamer of dimers. Binds only one seryl-tRNA(Sec) per dimer. Requires pyridoxal 5'-phosphate as cofactor.

It localises to the cytoplasm. It carries out the reaction L-seryl-tRNA(Sec) + selenophosphate + H(+) = L-selenocysteinyl-tRNA(Sec) + phosphate. It participates in aminoacyl-tRNA biosynthesis; selenocysteinyl-tRNA(Sec) biosynthesis; selenocysteinyl-tRNA(Sec) from L-seryl-tRNA(Sec) (bacterial route): step 1/1. In terms of biological role, converts seryl-tRNA(Sec) to selenocysteinyl-tRNA(Sec) required for selenoprotein biosynthesis. The polypeptide is L-seryl-tRNA(Sec) selenium transferase (Proteus mirabilis (strain HI4320)).